The primary structure comprises 444 residues: ATP-dependent 6-phosphofructokinase 2 (444 aa).

A Phosphoserine modification is found at Ser-55. Residues Gly-86, 149–150, and 174–177 contribute to the ATP site; these read RG and GDGT. Asp-175 is a binding site for Mg(2+). Residues 203-205, 248-250, Glu-304, and 362-365 each bind substrate; these read TVD, MGR, and YMIR. The active-site Proton acceptor is Asp-205.

This sequence belongs to the phosphofructokinase type A (PFKA) family. PPi-dependent PFK group II subfamily. Atypical ATP-dependent clade 'X' sub-subfamily. Homotetramer. The cofactor is Mg(2+). Mostly expressed in roots and stems.

The protein resides in the cytoplasm. It catalyses the reaction beta-D-fructose 6-phosphate + ATP = beta-D-fructose 1,6-bisphosphate + ADP + H(+). The protein operates within carbohydrate degradation; glycolysis; D-glyceraldehyde 3-phosphate and glycerone phosphate from D-glucose: step 3/4. Its activity is regulated as follows. Allosterically activated by AMP. Functionally, catalyzes the phosphorylation of D-fructose 6-phosphate to fructose 1,6-bisphosphate by ATP, the first committing step of glycolysis. The protein is ATP-dependent 6-phosphofructokinase 2 of Arabidopsis thaliana (Mouse-ear cress).